A 247-amino-acid polypeptide reads, in one-letter code: Anionic trypsin (247 aa).

A signal peptide spans 1–15 (MNPLLILAFLGAAVA). The propeptide at 16–23 (TPTDDDDK) is activation peptide. The region spanning 24-244 (IVGGYTCEEN…FVDWIQSTIA (221 aa)) is the Peptidase S1 domain. Intrachain disulfides connect Cys30/Cys160, Cys48/Cys64, Cys132/Cys233, Cys139/Cys206, Cys171/Cys185, and Cys196/Cys220. The active-site Charge relay system is His63. Positions 75, 77, 80, and 85 each coordinate Ca(2+). The Charge relay system role is filled by Asp107. Ser200 serves as the catalytic Charge relay system.

This sequence belongs to the peptidase S1 family. Ca(2+) serves as cofactor.

It localises to the secreted. The protein resides in the extracellular space. The enzyme catalyses Preferential cleavage: Arg-|-Xaa, Lys-|-Xaa.. The sequence is that of Anionic trypsin from Canis lupus familiaris (Dog).